The following is a 160-amino-acid chain: UPF0260 protein Rleg2_0895 (160 aa).

It belongs to the UPF0260 family.

In Rhizobium leguminosarum bv. trifolii (strain WSM2304), this protein is UPF0260 protein Rleg2_0895.